Here is a 510-residue protein sequence, read N- to C-terminus: ATP synthase subunit alpha (510 aa).

ATP is bound at residue Gly-169 to Thr-176.

It belongs to the ATPase alpha/beta chains family. F-type ATPases have 2 components, CF(1) - the catalytic core - and CF(0) - the membrane proton channel. CF(1) has five subunits: alpha(3), beta(3), gamma(1), delta(1), epsilon(1). CF(0) has three main subunits: a(1), b(2) and c(9-12). The alpha and beta chains form an alternating ring which encloses part of the gamma chain. CF(1) is attached to CF(0) by a central stalk formed by the gamma and epsilon chains, while a peripheral stalk is formed by the delta and b chains.

It localises to the cell inner membrane. The enzyme catalyses ATP + H2O + 4 H(+)(in) = ADP + phosphate + 5 H(+)(out). In terms of biological role, produces ATP from ADP in the presence of a proton gradient across the membrane. The alpha chain is a regulatory subunit. This Rickettsia peacockii (strain Rustic) protein is ATP synthase subunit alpha.